A 997-amino-acid chain; its full sequence is MSELIVSDVVALSVWGLLTVVKVYQGNFSLSVLFSEAQTLGFLFFISCHWLQSILLPWVVKIKCATRFDIDLVEMEMRAEKYLNSIPANVLEDRAKAYNVSKMTSIKNQIPSGKALYQNGKSLASMIKSQFQPISKVLKGGEVKSYNYIPVGSFTAGEHCELAVPIMPEEELAAIVPDSDFALVTKEDNKAKSVHVGAVEIVMECMTSPDCDIYGGAMFVDTFHEDPKNAVRALFVTQLKGGVSPRCLFFPDTQVEIKKGMNERFRLILSSGNSDFKPGENLAYLKANVAMCGISMNKGYVPTAFHESYARKERASVIEYLGRYSAVIHHRNEFKPEMLKRDGLSFRFGGKTKLIEKGPLQYEWSETASKVVSVKGTGPPTKEDETISKEVSETLGATEHVVFPTRNVVAQAQMEVAQFGRLLDDTKSLKLQSLLNSRIAAGRFSIPMTAVKGTVVFDGLLASLIGTTLRGAPMFRHTYRQSTKLRFIFTINVPISTGIGLMVGYNSVTSDKHLTNEYTISSEESVVWNPACQGVLEFSVSPNPCGMYWSYDYFRQTGSRLSICVISPWSATPTTDCAVAWQIHVDDEQMTMSIFNPTQAPAVLPVKRWMGNLIFKQGAQEQVKKMPLAIGAAVGDDKTAVMTMPNSLAAMWNYQIGTFNFEFTKLSSPFIKGTLLAFIAMDQDVSYSLEELQNFPNKIVQFDEKDGRAYVSFGEEHFAQAWSTQVSGAVTSAKRGCPYLYVVSKDCIASTICGDFQVGVKLLSIENYSPCGYNPGLVVASTIVQNTAGSNSTSLLAWPQFCSPCINVWSEFCALDIPVVDTTKVNFAQYSLDLVNPTVSANASGRNWRFVLIPSPMVYLLQTSDWKRGKLHFKLKILGKSNVKRSEWSSTSRIDVRRAPGTEYLNAITVFTAEPHADEINFEIEICGPNNGFEMWNADFGNQLSWMANVVIGNPDQAGIHQWYVRPGENFEVAGNRMVQPLALSGEDGTGMLPILK.

The tract at residues 370–376 is involved in tubule formation by the movement protein; the sequence is KVVSVKG.

In terms of assembly, interacts with the large capsid protein. Interacts with the small capsid protein. Homomultimer; assembles as pentons. Interacts with the movement protein (via C-terminus). As to quaternary structure, interacts (via C-terminus) with the large capsid protein. Specific enzymatic cleavages by picornain 3C-like protease in vivo yield mature proteins.

It is found in the host cell junction. It localises to the host plasmodesma. The protein localises to the virion. Functionally, responsible for viral RNA2 accumulation. May function by recruiting the RNA1-encoded polyprotein that contains the replication protein to RNA2 and enable its replication. In terms of biological role, transports the viral genome to neighboring plant cells directly through plasmosdesmata, without any budding. The movement protein allows efficient cell to cell propagation, by bypassing the host cell wall barrier. Acts by forming a tubular structure at the host plasmodesmata, enlarging it enough to allow free passage of virion capsids. Binds to GTP and to single-stranded RNA and single-stranded DNA in a non-sequence-specific manner. Together with the small capsid protein, forms an icosahedral capsid (T=3) enclosing the viral positive strand RNA genome, with a diameter of approximately 300 Angstroms. The capsid is formed from 60 copies each of the large and the small capsid protein. The large capsid protein interacts with the viral RNA. Its function is as follows. Together with the large capsid protein, forms an icosahedral capsid (T=3) enclosing the viral positive strand RNA genome, with a diameter of approximately 300 Angstroms. The capsid is formed from 60 copies each of the large and the small capsid protein. The small capsid protein forms the turrets at the fivefold axes of the viral particle. Also seems to act as suppressor of post-transcriptional gene silencing (PTGS), a mechanism of plant viral defense that limits the accumulation of viral RNAs. The protein is RNA2 polyprotein of Andean potato mottle virus (APMV).